Here is a 1314-residue protein sequence, read N- to C-terminus: Synergin gamma (1314 aa).

The stretch at 115–155 forms a coiled coil; the sequence is MQKQFAEEQQKRFEQQQKLLEEERKRRQFEEQKQKLRLLSS. The tract at residues 178-199 is disordered; it reads GFSRDAKMHPTPASHPKKPGPS. Residues 295-388 enclose the EH domain; sequence NESLVPDAYK…QFPAAPIPTL (94 aa). The DFXDF motif 1 signature appears at 457–461; that stretch reads DFQDF. A disordered region spans residues 460 to 498; sequence DFQDASKSGSLDDSFSDFQELPASSKTSNSQHGNSAPSL. Polar residues predominate over residues 462–496; that stretch reads QDASKSGSLDDSFSDFQELPASSKTSNSQHGNSAP. At Ser473 the chain carries Phosphoserine. An N6-acetyllysine modification is found at Lys513. The tract at residues 518 to 786 is interaction with AP1G1; it reads KGIAADKSSE…ADFHSSKFSS (269 aa). At Ser580 the chain carries Phosphoserine. Residues 666 to 678 are interaction with AP1G1, AP1G2 and GGA1; it reads LADDFGEFSLFGE. A DFXDF motif 2 motif is present at residues 690–694; sequence DFADF. Position 720 is a phosphoserine (Ser720). Lys744 bears the N6-acetyllysine mark. Phosphoserine occurs at positions 752 and 772. The short motif at 775 to 779 is the DFXDF motif 3 element; sequence DFADF. A phosphoserine mark is found at Ser812, Ser852, Ser855, Ser909, Ser919, and Ser935. Disordered regions lie at residues 972–1026 and 1073–1102; these read PQTS…DFGE and SLSL…NTLN. A compositionally biased stretch (basic and acidic residues) spans 976–990; sequence EQKEYENRDYKDFTK. Residues 1001-1019 are compositionally biased toward polar residues; sequence EATCPSPASSGASQETPNE. 5 positions are modified to phosphoserine: Ser1006, Ser1073, Ser1075, Ser1087, and Ser1098. The residue at position 1100 (Thr1100) is a Phosphothreonine.

As to quaternary structure, self-associates. Interacts with GGA1 (via GAE domain). Interacts with GGA2 and GGA3. Interacts with AP1G1 (via GAE domain), a subunit of adapter protein complex AP-1. Interacts with AP1G2 (via GAE domain) a subunit of adapter protein complex AP-1. Component of the aftiphilin/p200/gamma-synergin complex, at least composed of AFTPH/aftiphilin, HEATR5B/p200a and SYNRG/gamma-synergin, which plays a role in the AP1G1/AP-1-mediated trafficking of transferrin from early to recycling endosomes. Within the complex interacts with AFTPH/aftiphilin and HEATR5B/p200a; the interactions are direct. Interacts (via EH domain) with SCAMP1.

It is found in the cytoplasm. The protein resides in the golgi apparatus. The protein localises to the trans-Golgi network membrane. Its subcellular location is the perinuclear region. It localises to the cytoplasmic vesicle. It is found in the clathrin-coated vesicle. In terms of biological role, plays a role in endocytosis and/or membrane trafficking at the trans-Golgi network (TGN). May act by linking the adapter protein complex AP-1 to other proteins. Component of clathrin-coated vesicles. Component of the aftiphilin/p200/gamma-synergin complex, which plays roles in AP1G1/AP-1-mediated protein trafficking including the trafficking of transferrin from early to recycling endosomes, and the membrane trafficking of furin and the lysosomal enzyme cathepsin D between the trans-Golgi network (TGN) and endosomes. This is Synergin gamma from Homo sapiens (Human).